The primary structure comprises 306 residues: S-methyl-5'-thioadenosine phosphorylase (306 aa).

Residues T21, 63–64 (RH), and 96–97 (SA) contribute to the phosphate site. M198 contributes to the substrate binding site. S199 contributes to the phosphate binding site. 222–224 (DYD) contacts substrate.

Belongs to the PNP/MTAP phosphorylase family. MTAP subfamily. Homotrimer.

Its subcellular location is the cytoplasm. It localises to the nucleus. The enzyme catalyses S-methyl-5'-thioadenosine + phosphate = 5-(methylsulfanyl)-alpha-D-ribose 1-phosphate + adenine. Its pathway is amino-acid biosynthesis; L-methionine biosynthesis via salvage pathway; S-methyl-5-thio-alpha-D-ribose 1-phosphate from S-methyl-5'-thioadenosine (phosphorylase route): step 1/1. Its function is as follows. Catalyzes the reversible phosphorylation of S-methyl-5'-thioadenosine (MTA) to adenine and 5-methylthioribose-1-phosphate. Involved in the breakdown of MTA, a major by-product of polyamine biosynthesis. Responsible for the first step in the methionine salvage pathway after MTA has been generated from S-adenosylmethionine. Has broad substrate specificity with 6-aminopurine nucleosides as preferred substrates. The chain is S-methyl-5'-thioadenosine phosphorylase from Sclerotinia sclerotiorum (strain ATCC 18683 / 1980 / Ss-1) (White mold).